The primary structure comprises 160 residues: NADH-quinone oxidoreductase subunit I (160 aa).

4Fe-4S ferredoxin-type domains are found at residues 51–80 (RRYKNGEERCIACKLCEVVCPAQAITIEAA) and 91–120 (TKYDIDMTKCIYCGFCQEACPVDAIVEGPN). [4Fe-4S] cluster-binding residues include Cys60, Cys63, Cys66, Cys70, Cys100, Cys103, Cys106, and Cys110.

The protein belongs to the complex I 23 kDa subunit family. NDH-1 is composed of 14 different subunits. Subunits NuoA, H, J, K, L, M, N constitute the membrane sector of the complex. The cofactor is [4Fe-4S] cluster.

The protein localises to the cell inner membrane. The catalysed reaction is a quinone + NADH + 5 H(+)(in) = a quinol + NAD(+) + 4 H(+)(out). In terms of biological role, NDH-1 shuttles electrons from NADH, via FMN and iron-sulfur (Fe-S) centers, to quinones in the respiratory chain. The immediate electron acceptor for the enzyme in this species is believed to be ubiquinone. Couples the redox reaction to proton translocation (for every two electrons transferred, four hydrogen ions are translocated across the cytoplasmic membrane), and thus conserves the redox energy in a proton gradient. The protein is NADH-quinone oxidoreductase subunit I of Neorickettsia sennetsu (strain ATCC VR-367 / Miyayama) (Ehrlichia sennetsu).